The primary structure comprises 377 residues: Nitric oxide reductase FlRd-NAD(+) reductase (377 aa).

It belongs to the FAD-dependent oxidoreductase family. FAD serves as cofactor.

The protein localises to the cytoplasm. The catalysed reaction is 2 reduced [nitric oxide reductase rubredoxin domain] + NAD(+) + H(+) = 2 oxidized [nitric oxide reductase rubredoxin domain] + NADH. Its pathway is nitrogen metabolism; nitric oxide reduction. Functionally, one of at least two accessory proteins for anaerobic nitric oxide (NO) reductase. Reduces the rubredoxin moiety of NO reductase. In Escherichia coli (strain 55989 / EAEC), this protein is Nitric oxide reductase FlRd-NAD(+) reductase.